The primary structure comprises 171 residues: Cardioactive peptide (171 aa).

The signal sequence occupies residues 1–26; it reads MQMYHVVLGCSLAILLVILDIPQASC. Positions 27-49 are excised as a propeptide; that stretch reads DDVVIQKRQVDPAEMDRLLDPKR. A disulfide bridge connects residues Cys-54 and Cys-60. Cys-60 is modified (cysteine amide). The propeptide occupies 64-171; the sequence is RSDESMGTLV…QEEITKPWSR (108 aa). Residues 116–171 are disordered; that stretch reads QSNQFGAGMDRPLPLPIAGYRRKRFADPESQAPAPHSNLPRATSQLQEEITKPWSR.

Central nervous system; most neurons exhibit coexpression with burs.

It is found in the secreted. Cardioregulatory neurohormone that increases heart beat rate during adult wing inflation; has no effect on beat amplitude. The effect of CCAP is both ino- and chronotropic. The polypeptide is Cardioactive peptide (Periplaneta americana (American cockroach)).